The following is a 425-amino-acid chain: Glutamate-1-semialdehyde 2,1-aminomutase (425 aa).

An N6-(pyridoxal phosphate)lysine modification is found at lysine 265.

The protein belongs to the class-III pyridoxal-phosphate-dependent aminotransferase family. HemL subfamily. As to quaternary structure, homodimer. It depends on pyridoxal 5'-phosphate as a cofactor.

Its subcellular location is the cytoplasm. It catalyses the reaction (S)-4-amino-5-oxopentanoate = 5-aminolevulinate. It functions in the pathway porphyrin-containing compound metabolism; protoporphyrin-IX biosynthesis; 5-aminolevulinate from L-glutamyl-tRNA(Glu): step 2/2. The protein is Glutamate-1-semialdehyde 2,1-aminomutase of Thiobacillus denitrificans (strain ATCC 25259 / T1).